Here is a 305-residue protein sequence, read N- to C-terminus: Maximins-S type B/C (305 aa).

The N-terminal stretch at 1–18 (MNFNYFILVLFFITSGHA) is a signal peptide. Propeptides lie at residues 19–35 (KSETREVHQEAENHIKR) and 52–65 (SAEEQNLAEHLVTR). Asparagine 83 carries the post-translational modification Asparagine amide. Residues 87 to 100 (SAEEQDLAEHLVTR) constitute a propeptide that is removed on maturation. Asparagine 118 bears the Asparagine amide mark. Positions 122–135 (SAEEQDLAEDLVTR) are excised as a propeptide. Lysine 153 is subject to Lysine amide. A propeptide spanning residues 157–170 (SAEDQDLAEDLVTR) is cleaved from the precursor. Asparagine 188 is modified (asparagine amide). The propeptide occupies 192–205 (SAEEQDLAEHLVTR). Asparagine 223 carries the asparagine amide modification. Positions 227–240 (SAEEQDLSEDLVTR) are excised as a propeptide. Asparagine 258 is subject to Asparagine amide. Residues 262–275 (SAEEQDLVEDLVTR) constitute a propeptide that is removed on maturation. At lysine 293 the chain carries Lysine amide. Positions 297-305 (SAEQEKDMK) are excised as a propeptide.

This sequence belongs to the maximin-S family. Expressed by the skin dorsal glands.

It is found in the secreted. Functionally, maximin-S1 has no antimicrobial activity. Has no hemolytic activity. Maximin-S2 has an activity against mycoplasma but has no activity against common Gram-positive and Gram-negative bacteria nor fungi. Has no hemolytic activity. Its function is as follows. Maximin-S3 has an activity against mycoplasma but has no activity against common Gram-positive and Gram-negative bacteria nor fungi. Has no hemolytic activity. In terms of biological role, maximin-S4 has an activity against mycoplasma but has no activity against common Gram-positive and Gram-negative bacteria nor fungi. Has no hemolytic activity. Functionally, maximin-S5 has an activity against mycoplasma but has no activity against common Gram-positive and Gram-negative bacteria nor fungi. Has no hemolytic activity. The protein is Maximins-S type B/C of Bombina maxima (Giant fire-bellied toad).